The sequence spans 104 residues: MNTYNARLYIFSLALALVILKGTKCYMYVFLQEPGAAFCVDDSGVRYKPGDVWYDDEKCEKLRCSGAEASLKIIGAGCGIIHVVGCETVRGSGHYPNCCPRPKC.

A signal peptide spans 1-25 (MNTYNARLYIFSLALALVILKGTKC).

In terms of processing, contains 4 disulfide bonds. Expressed by the venom gland.

It is found in the secreted. The polypeptide is Toxin-like protein 14 (Urodacus yaschenkoi (Inland robust scorpion)).